A 121-amino-acid chain; its full sequence is Large ribosomal subunit protein bL20 (121 aa).

Belongs to the bacterial ribosomal protein bL20 family.

Binds directly to 23S ribosomal RNA and is necessary for the in vitro assembly process of the 50S ribosomal subunit. It is not involved in the protein synthesizing functions of that subunit. This chain is Large ribosomal subunit protein bL20, found in Methylorubrum populi (strain ATCC BAA-705 / NCIMB 13946 / BJ001) (Methylobacterium populi).